The following is a 44-amino-acid chain: Large ribosomal subunit protein bL34 (44 aa).

Belongs to the bacterial ribosomal protein bL34 family.

The chain is Large ribosomal subunit protein bL34 from Wolbachia sp. subsp. Brugia malayi (strain TRS).